Consider the following 175-residue polypeptide: Translation initiation factor IF-3 (175 aa).

This sequence belongs to the IF-3 family. As to quaternary structure, monomer.

The protein resides in the cytoplasm. In terms of biological role, IF-3 binds to the 30S ribosomal subunit and shifts the equilibrium between 70S ribosomes and their 50S and 30S subunits in favor of the free subunits, thus enhancing the availability of 30S subunits on which protein synthesis initiation begins. The sequence is that of Translation initiation factor IF-3 from Chlamydia trachomatis serovar D (strain ATCC VR-885 / DSM 19411 / UW-3/Cx).